Reading from the N-terminus, the 330-residue chain is Malate dehydrogenase (330 aa).

12–18 serves as a coordination point for NAD(+); sequence GAAGQIG. Substrate-binding residues include Arg93 and Arg99. NAD(+) is bound by residues Asn106, Gln113, and 130–132; that span reads VGN. Asn132 and Arg163 together coordinate substrate. The active-site Proton acceptor is His188.

Belongs to the LDH/MDH superfamily. MDH type 2 family.

It carries out the reaction (S)-malate + NAD(+) = oxaloacetate + NADH + H(+). Its function is as follows. Catalyzes the reversible oxidation of malate to oxaloacetate. This chain is Malate dehydrogenase, found in Thermobifida fusca (strain YX).